The chain runs to 132 residues: Fatty acid-binding protein (132 aa).

(5Z,8Z,11Z,14Z)-eicosatetraenoate-binding positions include Arg107 and 127–129 (RNY). Residues Arg107 and 127 to 129 (RNY) each bind (9Z)-octadecenoate.

It belongs to the calycin superfamily. Fatty-acid binding protein (FABP) family.

Its subcellular location is the cytoplasm. Functionally, may play a role in the transport of fatty acids. Binds to various fatty acids but not retinoids. This chain is Fatty acid-binding protein, found in Schistosoma japonicum (Blood fluke).